We begin with the raw amino-acid sequence, 114 residues long: Protein yippee-like (114 aa).

A Yippee domain is found at 14 to 111 (RTYSCVHCRA…IELAHMIKEN (98 aa)). Zn(2+)-binding residues include C18, C21, C74, and C77.

The protein belongs to the yippee family.

In terms of biological role, involved in regulating synaptic transmission in presynaptic neurons. In class IV dendritic arborization neurons (nociceptors), involved in regulating activation of their second-order neurons (SONs) and maintaining synaptic contact between nociceptors and their SONs. This chain is Protein yippee-like, found in Drosophila melanogaster (Fruit fly).